The primary structure comprises 361 residues: MVGKIAPIAVDAMGGDHAPGAIVQGAVNAARKGLPVVLVGPEARVREELARHRAASSLPLEVHPATEVVEMHDHPGQAMRRKKDNSIRVCFELVASGRAAGMVSAGNSGAVMAGAILVLGRPEGVERPAIVSVLPALKGAPLMLDMGAVVDCRPIHLVQFALMGEVYSRRVHGVARPRVAILSNGEEDTKGTDLTRAAAAALRRAPIDFVGYCEGRDLLTGEVDVIVTDGFTGNVALKTMEGTAKVVGEYLKRALRSTTVSKIGGLLSKAALEGMKKRIDWREVGGAPLVGVNGVGFISHGRSDALAVENAIRRAGDAARTHFIDEIARAVAPSHALLEVPADGAAAEQGPTPRRTAPRQT.

A disordered region spans residues 342–361; it reads ADGAAAEQGPTPRRTAPRQT.

The protein belongs to the PlsX family. Homodimer. Probably interacts with PlsY.

Its subcellular location is the cytoplasm. The catalysed reaction is a fatty acyl-[ACP] + phosphate = an acyl phosphate + holo-[ACP]. It functions in the pathway lipid metabolism; phospholipid metabolism. Functionally, catalyzes the reversible formation of acyl-phosphate (acyl-PO(4)) from acyl-[acyl-carrier-protein] (acyl-ACP). This enzyme utilizes acyl-ACP as fatty acyl donor, but not acyl-CoA. This chain is Phosphate acyltransferase, found in Anaeromyxobacter sp. (strain K).